Here is a 156-residue protein sequence, read N- to C-terminus: PopC secretion inhibitor (156 aa).

The tract at residues 1-89 (MNPGSAPWER…PVRSRAEVHQ (89 aa)) is disordered. Over residues 8 to 28 (WERRTRERMRAMSRKNGEWGD) the composition is skewed to basic and acidic residues.

In terms of assembly, interacts with PopC in non-starving cells.

The protein resides in the cytoplasm. With respect to regulation, in response to starvation, RelA is activated resulting in the accumulation of (p)ppGpp, which causes the degradation of PopD in an FtsH(D)-dependent manner, thereby releasing pre-formed PopC for secretion. Its function is as follows. Inhibitor of protease PopC. In non-starving cells, forms a cytoplasmic complex with PopC and inhibits PopC secretion and activity. In Myxococcus xanthus (strain DK1622), this protein is PopC secretion inhibitor.